Here is a 306-residue protein sequence, read N- to C-terminus: MPSVINTGHHHFSISNIFANWRAYYDITKPKVVALLVLTALVGMSLSVPGALPWQRLIPAMLGIGLLSSAAAAINHIVDEKIDTVMGRTHNRPLPAGKISVTNAIVFATSIALLGFIILYALVNPLTAFLTLAGLVGYSFVYTMYLKRATPQNITIGGLAGAIPPLLGWTAMTNEVVPNALLLVLIIFTWTPPHFWALAIHRKNDYAKVNIPMLPVTHGVSFTKTQILLYTVLLFVVCLLPYLVGMSNWLYLIGACSLNLIFFGYAWQLKFNAKEGTAMATFKFSIIHLMLLFIILLLDHYWLPMG.

The next 9 helical transmembrane spans lie at Val32–Leu52, Ile58–Val78, Asn103–Val123, Leu126–Leu146, Asn153–Thr173, Ala180–Ile200, Ile227–Ser247, Trp249–Leu269, and Ala278–Leu298.

It belongs to the UbiA prenyltransferase family. Protoheme IX farnesyltransferase subfamily.

It localises to the cell inner membrane. It catalyses the reaction heme b + (2E,6E)-farnesyl diphosphate + H2O = Fe(II)-heme o + diphosphate. The protein operates within porphyrin-containing compound metabolism; heme O biosynthesis; heme O from protoheme: step 1/1. Converts heme B (protoheme IX) to heme O by substitution of the vinyl group on carbon 2 of heme B porphyrin ring with a hydroxyethyl farnesyl side group. This chain is Protoheme IX farnesyltransferase, found in Colwellia psychrerythraea (strain 34H / ATCC BAA-681) (Vibrio psychroerythus).